The chain runs to 1241 residues: ATP-dependent helicase/nuclease subunit A (1241 aa).

The 474-residue stretch at 12-485 folds into the UvrD-like helicase ATP-binding domain; the sequence is SQWTDDQWKA…IDLAKNFRSR (474 aa). 33 to 40 contacts ATP; that stretch reads AAAGSGKT. Positions 505 to 805 constitute a UvrD-like helicase C-terminal domain; that stretch reads GEIDYDADAE…RIMTIHKSKG (301 aa).

This sequence belongs to the helicase family. AddA subfamily. As to quaternary structure, heterodimer of AddA and AddB/RexB. Mg(2+) is required as a cofactor.

The catalysed reaction is Couples ATP hydrolysis with the unwinding of duplex DNA by translocating in the 3'-5' direction.. It catalyses the reaction ATP + H2O = ADP + phosphate + H(+). The heterodimer acts as both an ATP-dependent DNA helicase and an ATP-dependent, dual-direction single-stranded exonuclease. Recognizes the chi site generating a DNA molecule suitable for the initiation of homologous recombination. The AddA nuclease domain is required for chi fragment generation; this subunit has the helicase and 3' -&gt; 5' nuclease activities. This Bacillus cereus (strain B4264) protein is ATP-dependent helicase/nuclease subunit A.